The chain runs to 73 residues: MMFPIRCFSCGNVIAEVFEEYKERILKGENPKDVLDDLGIKKYCCRRMFISYRIGEDGREIIDEIIAHDERYL.

4 residues coordinate Zn(2+): cysteine 7, cysteine 10, cysteine 44, and cysteine 45.

It belongs to the archaeal Rpo10/eukaryotic RPB10 RNA polymerase subunit family. In terms of assembly, part of the RNA polymerase complex. Forms an Rpo3-Rpo10-Rpo11-Rpo12 complex upon coexpression. It depends on Zn(2+) as a cofactor.

Its subcellular location is the cytoplasm. The catalysed reaction is RNA(n) + a ribonucleoside 5'-triphosphate = RNA(n+1) + diphosphate. DNA-dependent RNA polymerase (RNAP) catalyzes the transcription of DNA into RNA using the four ribonucleoside triphosphates as substrates. This chain is DNA-directed RNA polymerase subunit Rpo10, found in Methanocaldococcus jannaschii (strain ATCC 43067 / DSM 2661 / JAL-1 / JCM 10045 / NBRC 100440) (Methanococcus jannaschii).